A 2375-amino-acid chain; its full sequence is MNLDSLSLALSQISYLVDNLTKKNYRASQQEIQHIVNRHGPEADRHLLRCLFSHVDFSGDGKSSGKDFHQTQFLIQECASLITKPNFISTLSYAIDNPLHYQKSLKPAPHLFAQLSKVLKLSKVQEVIFGLALLNSSSPDLRGFAAQFIKQKLPDLLRSYIDADVSGNQEGGFQDIAIEVLHLLLSHLLFGQKGAFGVGQEQIDAFLKTLRRDFPQERCPVVLAPLLYPEKRDILMDRILPDSGGVAKTMMESSLADFMQEVGYGFCASIEECRNIIMQFGVREVTAAQVARVLGMMARTHSGLTDGIPLQSISAPGSGIWSDGKDKSEGAQAHTWNVEVLIDVLKELNPSLNFKEVTYELDHPGFQIRDSKGLHNVVYGIQRGLGMEVFPVDFIYRPWKHAEGQLSFIQHSLINPEVFCFADYPCHTVATDILKAPPEDDNREIATWKSLDLIESLLRLAEVGQYEQVKQLFSFPIKHCPDMLVLALLQINTSWHTLRHELISTLMPIFLGNHPNSAIILHYAWHGQGQSPSIRQLIMHAMAEWYMRGEQYDQAKLSRILDVAQDLKALSMLLNGTPFAFVIDLAALASRREYLKLDKWLTDKIREHGEPFIQACMTFLKRRCPSILGGLAPEKDQPKSAQLPAETLATMLACLQACAGSVSQELSETILTMVANCSNVMNKARQPPPGVMPKGRPPSASSLDAISPVQIDPLAGMASLSIGGSAAPHTQSMQGFPPNLGSAFSTPQSPAKAFPPLSTPNQTTAFSGIGGLSSQLPGGLGTGSLTGIGTGALGLPAVNNDPFVQRKLGTSGLNQPTFQQSKMKPSDLSQVWPEANQHFSKEIDDEANSYFQRIYNHPPHPTMSVDEVLEMLQRFKDSTIKREREVFNCMLRNLFEEYRFFPQYPDKELHITACLFGGIIEKGLVTYMALGLALRYVLEALRKPFGSKMYYFGIAALDRFKNRLKDYPQYCQHLASISHFMQFPHHLQEYIEYGQQSRDPPVKMQGSITTPGSIALAQAQAQAQVPAKAPLAGQVNTMVTTSTTTTVAKTVTVTKPTGVSFKKDVPPSINTTNIDTLLVATDQTERIVEPPENIQEKIAFIFNNLSQSNMTQKVEELKETVKEEFMPWVSQYLVMKRVSIEPNFHSLYSNFLDTLKNPEFNKMVLNETYRNIKVLLTSDKAAANFSDRSLLKNLGHWLGMITLAKNKPILHTDLDVKSLLLEAYVKGQQELLYVVPFVAKVLESSIRSLVFRPPNPWTMAIMNVLAELHQEHDLKLNLKFEIEVLCKNLALDINELKPGNLLKDKDRLKNLDEQLSAPKKDVKQPEELPAITTTTTSTTPATSTTCTATVPPQPQYSYHDINVYSLAGLAPHITLNPTIPLFQAHPQLKQCVRQAIERAVQELVHPVVDRSIKIAMTTCEQIVRKDFALDSEESRMRIAAHHMMRNLTAGMAMITCREPLLMSISTNLKNSFASALRTASPQQREMMDQAAAQLAQDNCELACCFIQKTAVEKAGPEMDKRLATEFELRKHARQEGRRYCDPVVLTYQAERMPEQIRLKVGGVDPKQLAVYEEFARNVPGFLPTNDLSQPTGFLAQPMKQAWATDDVAQIYDKCITELEQHLHAIPPTLAMNPQAQALRSLLEVVVLSRNSRDAIAALGLLQKAVEGLLDATSGADADLLLRYRECHLLVLKALQDGRAYGSPWCNKQITRCLIECRDEYKYNVEAVELLIRNHLVNMQQYDLHLAQSMENGLNYMAVAFAMQLVKILLVDERSVAHITEADLFHTIETLMRINAHSRGNAPEGLPQLMEVVRSNYEAMIDRAHGGPNFMMHSGISQASEYDDPPGLREKAEYLLREWVNLYHSAAAGRDSTKAFSAFVGQMHQQGILKTDDLITRFFRLCTEMCVEISYRAQAEQQHNPAANPTMIRAKCYHNLDAFVRLIALLVKHSGEATNTVTKINLLNKVLGIVVGVLLQDHDVRQSEFQQLPYHRIFIMLLLELNAPEHVLETINFQTLTAFCNTFHILRPTKAPGFVYAWLELISHRIFIARMLAHTPQQKGWPMYAQLLIDLFKYLAPFLRNVELTKPMQILYKGTLRVLLVLLHDFPEFLCDYHYGFCDVIPPNCIQLRNLILSAFPRNMRLPDPFTPNLKVDMLSEINIAPRILTNFTGVMPPQFKKDLDSYLKTRSPVTFLSDLRSNLQVSNEPGNRYNLQLINALVLYVGTQAIAHIHNKGSTPSMSTITHSAHMDIFQNLAVDLDTEGRYLFLNAIANQLRYPNSHTHYFSCTMLYLFAEANTEAIQEQITRVLLERLIVNRPHPWGLLITFIELIKNPAFKFWNHEFVHCAPEIEKLFQSVAQCCMGQKQAQQVMEGTGAS.

Short sequence motifs (LXXLL) lie at residues Leu-153–Leu-157, Leu-181–Leu-185, and Leu-223–Leu-227. The residue at position 318 (Ser-318) is a Phosphoserine. The LXXLL signature appears at Leu-570–Leu-574. A disordered region spans residues Ser-725–Gly-770. Residues Asn-799 to Ile-1014 form an interaction with ZFP36 region. Position 1060 is a phosphoserine (Ser-1060). An interaction with CNOT6, CNOT6L, CNOT7 and CNOT8 region spans residues Glu-1089–Thr-1604. Residues Gln-1314–Glu-1326 show a composition bias toward basic and acidic residues. A disordered region spans residues Gln-1314–Pro-1351. Residues Thr-1332 to Thr-1349 show a composition bias toward low complexity. 3 consecutive short sequence motifs (LXXLL) follow at residues Leu-1638–Leu-1642, Leu-1941–Leu-1945, and Leu-2095–Leu-2099.

Belongs to the CNOT1 family. Component of the CCR4-NOT complex; distinct complexes seem to exist that differ in the participation of probably mutually exclusive catalytic subunits. In the complex, interacts directly with CNOT6, CNOT6L, CNOT7 or CNOT8. Interacts in a ligand-dependent fashion with ESR1 and RXRA. Interacts with NANOS2, TOB1 and ZFP36. Interacts with TNRC6A, TNRC6B or TNRC6C; the interactions are direct. Interacts with YTHDF2; the interaction is direct and promotes recruitment of the CCR4-NOT complex to N6-methyladenosine (m6A)-containing mRNAs, leading to their deadenylation and subsequent degradation. Interacts with EIF4ENIF1/4E-T. Interacts in an RNA-independent manner with BICC1 (via KH domains). Interacts with TEX13A; the interaction may inhibit CNOT1 binding to mRNA and subsequently CNOT1-mediated mRNA degradation.

It is found in the cytoplasm. It localises to the P-body. The protein localises to the nucleus. Functionally, scaffolding component of the CCR4-NOT complex which is one of the major cellular mRNA deadenylases and is linked to various cellular processes including bulk mRNA degradation, miRNA-mediated repression, translational repression during translational initiation and general transcription regulation. Additional complex functions may be a consequence of its influence on mRNA expression. Its scaffolding function implies its interaction with the catalytic complex module and diverse RNA-binding proteins mediating the complex recruitment to selected mRNA 3'UTRs. Involved in degradation of AU-rich element (ARE)-containing mRNAs probably via association with ZFP36. Mediates the recruitment of the CCR4-NOT complex to miRNA targets and to the RISC complex via association with TNRC6A, TNRC6B or TNRC6C. Acts as a transcriptional repressor. Represses the ligand-dependent transcriptional activation by nuclear receptors. Involved in the maintenance of embryonic stem (ES) cell identity; prevents their differentiation towards extraembryonic trophectoderm lineages. Plays a role in rapid sperm motility via mediating timely mRNA turnover. This chain is CCR4-NOT transcription complex subunit 1 (Cnot1), found in Mus musculus (Mouse).